A 435-amino-acid chain; its full sequence is Palmitoyltransferase pfa4 (435 aa).

The Cytoplasmic segment spans residues methionine 1–arginine 10. The chain crosses the membrane as a helical span at residues leucine 11–phenylalanine 31. Over leucine 32–asparagine 48 the chain is Lumenal. A helical transmembrane segment spans residues isoleucine 49–valine 69. The Cytoplasmic segment spans residues proline 70–serine 129. Residues arginine 91–phenylalanine 141 enclose the DHHC domain. Cysteine 121 (S-palmitoyl cysteine intermediate) is an active-site residue. A helical membrane pass occupies residues histidine 130–leucine 150. The Lumenal portion of the chain corresponds to glutamate 151 to glycine 179. Residues histidine 180–leucine 200 traverse the membrane as a helical segment. The Cytoplasmic segment spans residues arginine 201–glutamine 435. Residues arginine 359–glutamate 368 show a composition bias toward basic and acidic residues. Residues arginine 359–glutamate 408 form a disordered region. Positions alanine 376–histidine 388 are enriched in acidic residues. Residues glycine 389–glycine 405 show a composition bias toward basic and acidic residues.

The protein belongs to the DHHC palmitoyltransferase family. PFA4 subfamily.

It localises to the endoplasmic reticulum membrane. It catalyses the reaction L-cysteinyl-[protein] + hexadecanoyl-CoA = S-hexadecanoyl-L-cysteinyl-[protein] + CoA. Mediates the reversible addition of palmitate to target proteins, thereby regulating their membrane association and biological function. The protein is Palmitoyltransferase pfa4 of Emericella nidulans (strain FGSC A4 / ATCC 38163 / CBS 112.46 / NRRL 194 / M139) (Aspergillus nidulans).